Consider the following 703-residue polypeptide: MLNLFAAFKKDRIWDFDGGIHPPEMKTQSSGVPLRTAPLPDKFIIPLQQHLGPEGELCVKVGDTVLKGQPLTVGRGRTVPVHAPTSGTISAITPHITAHPSGLAELCVIIQPDGEDRWCERAPVADYRQLTASELIQRIHQAGIAGLGGAGFPTASKLQGGMNGVETLILNAAECEPYITADDRLMQEHADQVIEGTQILRHLLQPKVTLIGIEDNKPEAIAALKLALRGQPGIALRVIPTKYPSGGAKQLTKILIGKEVPHGKHSSAIGVLMQNVGTAFAIKRAIVDGEPLIERVVTLTGEALSLPGNLWARIGTPVQHLLKFAGFQPQAQQMVVMGGPLMGFTLPALHVPIVKISNCILAPSVSEMAPQEQEQSCIRCGLCVDACPAGLLPQQLYWFSRGEEHEKARNHNLFDCIECGACAFVCPSNIPLVQYYRQEKAEIKAIDLEAARTAEAKARYEAKLARLEREKLAREERHKKAAVKLTDGDQDAVQAALARVRSKNAVPATGTISGDAPDNSEMNAAREARKAQARERRAQQETPVAPVTASASEDEDPRKAAVAAALARVKAKKAAPQATAVETPAESPAVVTEEDPRKAAVAAALARVKAKKAAQQATAVETPAESPAVVTEEDPRKAAVAAALARVKAKKAAQQATAVETPAESPAVVTEEDPRKAAVAAAIARAKAKRAAQSLTTADTDKE.

4Fe-4S ferredoxin-type domains are found at residues 368–397 and 407–436; these read MAPQ…QQLY and KARN…VQYY. 8 residues coordinate [4Fe-4S] cluster: cysteine 377, cysteine 380, cysteine 383, cysteine 387, cysteine 416, cysteine 419, cysteine 422, and cysteine 426. 2 disordered regions span residues 505–558 and 653–674; these read AVPA…EDPR and AQQA…EEDP. The segment covering 524–539 has biased composition (basic and acidic residues); that stretch reads AAREARKAQARERRAQ.

This sequence belongs to the 4Fe4S bacterial-type ferredoxin family. RnfC subfamily. The complex is composed of six subunits: RnfA, RnfB, RnfC, RnfD, RnfE and RnfG. [4Fe-4S] cluster serves as cofactor.

Its subcellular location is the cell inner membrane. Part of a membrane-bound complex that couples electron transfer with translocation of ions across the membrane. This is Ion-translocating oxidoreductase complex subunit C from Serratia proteamaculans (strain 568).